The primary structure comprises 277 residues: MAAARPFLKMHGAGNDFVVLDARAHPLDLAPAAAARIADRHRGVGCDQIILIERDDGAAAFMRILNADGSESGACGNATRCVAALLAGETGARRLTIRTNAGLLPAEIKGPTLVEVDMGAPKLGWEDIPLAEPADTLSLRLALGPVQNPAACSMGNPHATFFVDDLTHLQIETIGPKLEHARLFPERANIGFARIDAPDRIRLRVWERGAGLTLACGSGACAALVNAHRRGLAARRAEIEMDGGTLTLTWRDDGHVLMEGPVALVFEGELDAAMLAP.

Substrate-binding residues include asparagine 15, glutamine 48, and asparagine 66. Catalysis depends on cysteine 75, which acts as the Proton donor. Residues 76-77 (GN), asparagine 156, asparagine 189, and 207-208 (ER) each bind substrate. The Proton acceptor role is filled by cysteine 216. 217-218 (GS) contributes to the substrate binding site.

The protein belongs to the diaminopimelate epimerase family. As to quaternary structure, homodimer.

It is found in the cytoplasm. It carries out the reaction (2S,6S)-2,6-diaminopimelate = meso-2,6-diaminopimelate. The protein operates within amino-acid biosynthesis; L-lysine biosynthesis via DAP pathway; DL-2,6-diaminopimelate from LL-2,6-diaminopimelate: step 1/1. Catalyzes the stereoinversion of LL-2,6-diaminopimelate (L,L-DAP) to meso-diaminopimelate (meso-DAP), a precursor of L-lysine and an essential component of the bacterial peptidoglycan. In Acidiphilium cryptum (strain JF-5), this protein is Diaminopimelate epimerase.